Here is a 455-residue protein sequence, read N- to C-terminus: Bifunctional protein GlmU (455 aa).

The pyrophosphorylase stretch occupies residues 1–227; sequence MKLKAIILAA…YEEIMAVNSR (227 aa). Residues 8 to 11, Lys22, Gln72, and 77 to 78 contribute to the UDP-N-acetyl-alpha-D-glucosamine site; these read LAAG and GT. Asp100 lines the Mg(2+) pocket. Gly137, Glu152, Asn167, and Asn225 together coordinate UDP-N-acetyl-alpha-D-glucosamine. Position 225 (Asn225) interacts with Mg(2+). The interval 228–248 is linker; the sequence is EQLADVEAIMRRRIAKKHMAN. The interval 249-455 is N-acetyltransferase; the sequence is GVTIMNPEHV…WTKRKGLLKK (207 aa). The UDP-N-acetyl-alpha-D-glucosamine site is built by Arg330 and Lys348. His360 serves as the catalytic Proton acceptor. UDP-N-acetyl-alpha-D-glucosamine contacts are provided by Tyr363 and Asn374. Acetyl-CoA-binding positions include 383–384, Ser402, Cys420, and Arg437; that span reads NY.

The protein in the N-terminal section; belongs to the N-acetylglucosamine-1-phosphate uridyltransferase family. This sequence in the C-terminal section; belongs to the transferase hexapeptide repeat family. In terms of assembly, homotrimer. It depends on Mg(2+) as a cofactor.

Its subcellular location is the cytoplasm. It carries out the reaction alpha-D-glucosamine 1-phosphate + acetyl-CoA = N-acetyl-alpha-D-glucosamine 1-phosphate + CoA + H(+). It catalyses the reaction N-acetyl-alpha-D-glucosamine 1-phosphate + UTP + H(+) = UDP-N-acetyl-alpha-D-glucosamine + diphosphate. It participates in nucleotide-sugar biosynthesis; UDP-N-acetyl-alpha-D-glucosamine biosynthesis; N-acetyl-alpha-D-glucosamine 1-phosphate from alpha-D-glucosamine 6-phosphate (route II): step 2/2. Its pathway is nucleotide-sugar biosynthesis; UDP-N-acetyl-alpha-D-glucosamine biosynthesis; UDP-N-acetyl-alpha-D-glucosamine from N-acetyl-alpha-D-glucosamine 1-phosphate: step 1/1. It functions in the pathway bacterial outer membrane biogenesis; LPS lipid A biosynthesis. Its function is as follows. Catalyzes the last two sequential reactions in the de novo biosynthetic pathway for UDP-N-acetylglucosamine (UDP-GlcNAc). The C-terminal domain catalyzes the transfer of acetyl group from acetyl coenzyme A to glucosamine-1-phosphate (GlcN-1-P) to produce N-acetylglucosamine-1-phosphate (GlcNAc-1-P), which is converted into UDP-GlcNAc by the transfer of uridine 5-monophosphate (from uridine 5-triphosphate), a reaction catalyzed by the N-terminal domain. In Alkaliphilus oremlandii (strain OhILAs) (Clostridium oremlandii (strain OhILAs)), this protein is Bifunctional protein GlmU.